The following is a 138-amino-acid chain: uncharacterized protein (138 aa).

Helical transmembrane passes span 12-32 (LHFLGFIGGIFAILGVIVLPI), 62-82 (LIAVPLFVLGYFISTIDFSVL), and 111-131 (FHWVASLPAWFITTVCALICS).

The protein localises to the cell membrane. This is an uncharacterized protein from Haemophilus influenzae (strain ATCC 51907 / DSM 11121 / KW20 / Rd).